Here is a 262-residue protein sequence, read N- to C-terminus: UDP-2,3-diacylglucosamine hydrolase (262 aa).

Mn(2+)-binding residues include D10, H12, D47, N86, H121, H218, and H220.

Belongs to the LpxH family. It depends on Mn(2+) as a cofactor.

It is found in the cell inner membrane. It localises to the cytoplasm. It carries out the reaction UDP-2-N,3-O-bis[(3R)-3-hydroxytetradecanoyl]-alpha-D-glucosamine + H2O = 2-N,3-O-bis[(3R)-3-hydroxytetradecanoyl]-alpha-D-glucosaminyl 1-phosphate + UMP + 2 H(+). The protein operates within glycolipid biosynthesis; lipid IV(A) biosynthesis; lipid IV(A) from (3R)-3-hydroxytetradecanoyl-[acyl-carrier-protein] and UDP-N-acetyl-alpha-D-glucosamine: step 4/6. Hydrolyzes the pyrophosphate bond of UDP-2,3-diacylglucosamine to yield 2,3-diacylglucosamine 1-phosphate (lipid X) and UMP by catalyzing the attack of water at the alpha-P atom. Involved in the biosynthesis of lipid A, a phosphorylated glycolipid that anchors the lipopolysaccharide to the outer membrane of the cell. The chain is UDP-2,3-diacylglucosamine hydrolase from Porphyromonas gingivalis (strain ATCC BAA-308 / W83).